The sequence spans 82 residues: Probable glutamyl-tRNA(Gln) amidotransferase subunit C (82 aa).

Belongs to the GatC family. In terms of assembly, heterotrimer of A, B and C subunits.

The enzyme catalyses L-glutamyl-tRNA(Gln) + L-glutamine + ATP + H2O = L-glutaminyl-tRNA(Gln) + L-glutamate + ADP + phosphate + H(+). It carries out the reaction L-aspartyl-tRNA(Asn) + L-glutamine + ATP + H2O = L-asparaginyl-tRNA(Asn) + L-glutamate + ADP + phosphate + 2 H(+). In terms of biological role, allows the formation of correctly charged Asn-tRNA(Asn) or Gln-tRNA(Gln) through the transamidation of misacylated Asp-tRNA(Asn) or Glu-tRNA(Gln) in organisms which lack either or both of asparaginyl-tRNA or glutaminyl-tRNA synthetases. The reaction takes place in the presence of glutamine and ATP through an activated phospho-Asp-tRNA(Asn) or phospho-Glu-tRNA(Gln). The protein is Probable glutamyl-tRNA(Gln) amidotransferase subunit C of Methanocaldococcus jannaschii (strain ATCC 43067 / DSM 2661 / JAL-1 / JCM 10045 / NBRC 100440) (Methanococcus jannaschii).